The following is a 197-amino-acid chain: Peptidyl-tRNA hydrolase (197 aa).

Residue Tyr-23 participates in tRNA binding. The active-site Proton acceptor is His-28. Residues Phe-73, Asn-75, and Asn-121 each coordinate tRNA.

It belongs to the PTH family. In terms of assembly, monomer.

It is found in the cytoplasm. The enzyme catalyses an N-acyl-L-alpha-aminoacyl-tRNA + H2O = an N-acyl-L-amino acid + a tRNA + H(+). Functionally, hydrolyzes ribosome-free peptidyl-tRNAs (with 1 or more amino acids incorporated), which drop off the ribosome during protein synthesis, or as a result of ribosome stalling. In terms of biological role, catalyzes the release of premature peptidyl moieties from peptidyl-tRNA molecules trapped in stalled 50S ribosomal subunits, and thus maintains levels of free tRNAs and 50S ribosomes. The protein is Peptidyl-tRNA hydrolase of Frankia casuarinae (strain DSM 45818 / CECT 9043 / HFP020203 / CcI3).